The primary structure comprises 515 residues: MAMRELSQLNRDSDGDEEVWVKHYSSNHQILLVGEGDFSFSHSLATLFGSASNICASSLDSYDVVVRKYKKARSNLKTLKRLGALLLHGVDATTLHFHPDLRYRRFDRVIFNFPHAGFHGRESDSSLIRKHRELVFGFFNGASRLLRANGEVHVSHKNKAPFSEWNLEELASRCFLVLIQRVAFEKNNYPGYENKRGDGRRCDQPFLLGECSTFKFRFSRVAKELYAEKVRSREVKERESMYPEAILNKQPVSFDHRYRLQTEFEAIAGTITLGKSKILWLSQEKGHLHWIFVTTKNVDVYSSKIPVFLICTLESRQRDIACFVKTFQFKLVKNHYPNTLTAGVEFLVKFITGKYEECQQVTYLRKNFSGYGDGNKQRIVLKMDMSDEKSMKKAMKIASAKPGVRSVSIQGQNDQLVLLGEGIDLAELTRELKKKVCMTTIITVQAAPPQQPPQPHPMGQYNQMPPARRCTCEIPNSGFCGFCRSMSQPNYQVVPSPYYPPMLYCRDETDGCRIL.

The 69-residue stretch at 376–444 (KQRIVLKMDM…KVCMTTIITV (69 aa)) folds into the HMA domain. At C512 the chain carries Cysteine methyl ester. C512 carries S-farnesyl cysteine lipidation. The propeptide at 513 to 515 (RIL) is removed in mature form.

It belongs to the HIPP family.

Its function is as follows. Heavy-metal-binding protein. The protein is Heavy metal-associated isoprenylated plant protein 41 of Arabidopsis thaliana (Mouse-ear cress).